A 219-amino-acid chain; its full sequence is Ribose-5-phosphate isomerase A (219 aa).

Substrate contacts are provided by residues 28 to 31, 81 to 84, and 94 to 97; these read SGST, DGAD, and KGGG. The active-site Proton acceptor is Glu103. Lys121 provides a ligand contact to substrate.

The protein belongs to the ribose 5-phosphate isomerase family. In terms of assembly, homodimer.

The catalysed reaction is aldehydo-D-ribose 5-phosphate = D-ribulose 5-phosphate. The protein operates within carbohydrate degradation; pentose phosphate pathway; D-ribose 5-phosphate from D-ribulose 5-phosphate (non-oxidative stage): step 1/1. Catalyzes the reversible conversion of ribose-5-phosphate to ribulose 5-phosphate. The polypeptide is Ribose-5-phosphate isomerase A (Actinobacillus pleuropneumoniae serotype 5b (strain L20)).